The primary structure comprises 494 residues: Alpha-amylase-related protein (494 aa).

The N-terminal stretch at 1-20 (MIKFALALTLCLAGASLSLA) is a signal peptide. The residue at position 21 (Gln21) is a Pyrrolidone carboxylic acid. Cysteines 48 and 104 form a disulfide. Positions 118, 169, and 178 each coordinate Ca(2+). Cysteines 157 and 171 form a disulfide. Arg206 provides a ligand contact to chloride. The active-site Nucleophile is the Asp208. Ca(2+) is bound at residue His212. The active-site Proton donor is Glu245. Positions 308 and 343 each coordinate chloride. Disulfide bonds link Cys376-Cys382, Cys418-Cys441, and Cys448-Cys460.

Belongs to the glycosyl hydrolase 13 family. As to quaternary structure, monomer. The cofactor is Ca(2+). Requires chloride as cofactor.

Its subcellular location is the secreted. It catalyses the reaction Endohydrolysis of (1-&gt;4)-alpha-D-glucosidic linkages in polysaccharides containing three or more (1-&gt;4)-alpha-linked D-glucose units.. In Drosophila serrata (Fruit fly), this protein is Alpha-amylase-related protein (Amyrel).